Here is a 210-residue protein sequence, read N- to C-terminus: Large ribosomal subunit protein uL4 (210 aa).

A disordered region spans residues 46–85 (QGTASTLTRSEVRGGGRKPYKQKGTGRARQGSIRTPLRPG). Positions 60–71 (GGRKPYKQKGTG) are enriched in basic residues.

This sequence belongs to the universal ribosomal protein uL4 family. Part of the 50S ribosomal subunit.

Its function is as follows. One of the primary rRNA binding proteins, this protein initially binds near the 5'-end of the 23S rRNA. It is important during the early stages of 50S assembly. It makes multiple contacts with different domains of the 23S rRNA in the assembled 50S subunit and ribosome. Functionally, forms part of the polypeptide exit tunnel. The chain is Large ribosomal subunit protein uL4 from Prochlorococcus marinus (strain AS9601).